The primary structure comprises 131 residues: ATP synthase epsilon chain (131 aa).

The protein belongs to the ATPase epsilon chain family. As to quaternary structure, F-type ATPases have 2 components, CF(1) - the catalytic core - and CF(0) - the membrane proton channel. CF(1) has five subunits: alpha(3), beta(3), gamma(1), delta(1), epsilon(1). CF(0) has three main subunits: a, b and c.

It is found in the cell membrane. In terms of biological role, produces ATP from ADP in the presence of a proton gradient across the membrane. This chain is ATP synthase epsilon chain, found in Bacillus licheniformis (strain ATCC 14580 / DSM 13 / JCM 2505 / CCUG 7422 / NBRC 12200 / NCIMB 9375 / NCTC 10341 / NRRL NRS-1264 / Gibson 46).